The following is a 382-amino-acid chain: Ustilagic acid biosynthesis cluster protein orf2 (382 aa).

Polar residues predominate over residues 1 to 20 (MLQEAKVSTHTSNPLSQSVP). The segment at 1 to 22 (MLQEAKVSTHTSNPLSQSVPQY) is disordered.

It functions in the pathway secondary metabolite biosynthesis. Its function is as follows. Part of the gene cluster that mediates the biosynthesis of the glycolipid biosurfactant ustilagic acid (UA). UA is a secreted cellobiose glycolipid that is toxic for many microorganisms and confers biocontrol activity to U.maydis. UA consists of 15,16-dihydroxypalmitic or 2,15,16-trihydroxypalmitic acid, which is O-glycosidically linked to cellobiose at its terminal hydroxyl group. In addition, the cellobiose moiety is acetylated and acylated with a short-chain hydroxy fatty acid. UA biosynthesis starts with omega-hydroxylation of palmitic acid catalyzed by the cytochrome P450 monooxygenase cyp1. Terminal hydroxylation of palmitic acid precedes subterminal hydroxylation catalyzed by the cytochrome P450 monooxygenase cyp2. Sequential glucosylation of the hydroxy fatty acid is probably catalyzed by the glycosyltransferase ugt1. The cellobiose lipid is further decorated by acetylation of the proximal glucose residue and by acylation with a short-chain beta-hydroxy fatty acid at the distal glucose residue. The acyltransferase uat1 may be a good candidate for catalyzing either acetylation or acylation of the cellobiose lipid. The fatty acid synthase fas2 may be involved in synthesis of the carbon backbone of the short-chain beta-hydroxy fatty acid esterified to the cellobiose disaccharide. The secreted UA consists of a mixture of both alpha-hydroxylated and non-hydroxylated glycolipids; therefore, alpha-hydroxylation of the long-chain fatty, catalyzed by the fatty acid hydroxylase ahd1, occurs late in UA biosynthesis and may be the last step before secretion. This is Ustilagic acid biosynthesis cluster protein orf2 from Mycosarcoma maydis (Corn smut fungus).